We begin with the raw amino-acid sequence, 249 residues long: 3-deoxy-manno-octulosonate cytidylyltransferase (249 aa).

It belongs to the KdsB family.

The protein resides in the cytoplasm. The catalysed reaction is 3-deoxy-alpha-D-manno-oct-2-ulosonate + CTP = CMP-3-deoxy-beta-D-manno-octulosonate + diphosphate. It participates in nucleotide-sugar biosynthesis; CMP-3-deoxy-D-manno-octulosonate biosynthesis; CMP-3-deoxy-D-manno-octulosonate from 3-deoxy-D-manno-octulosonate and CTP: step 1/1. Its pathway is bacterial outer membrane biogenesis; lipopolysaccharide biosynthesis. Its function is as follows. Activates KDO (a required 8-carbon sugar) for incorporation into bacterial lipopolysaccharide in Gram-negative bacteria. This chain is 3-deoxy-manno-octulosonate cytidylyltransferase, found in Brucella anthropi (strain ATCC 49188 / DSM 6882 / CCUG 24695 / JCM 21032 / LMG 3331 / NBRC 15819 / NCTC 12168 / Alc 37) (Ochrobactrum anthropi).